Here is a 283-residue protein sequence, read N- to C-terminus: Bifunctional protein FolD (283 aa).

NADP(+) contacts are provided by residues 166–168, Ser-191, and Ile-232; that span reads GRS.

It belongs to the tetrahydrofolate dehydrogenase/cyclohydrolase family. As to quaternary structure, homodimer.

It catalyses the reaction (6R)-5,10-methylene-5,6,7,8-tetrahydrofolate + NADP(+) = (6R)-5,10-methenyltetrahydrofolate + NADPH. The enzyme catalyses (6R)-5,10-methenyltetrahydrofolate + H2O = (6R)-10-formyltetrahydrofolate + H(+). Its pathway is one-carbon metabolism; tetrahydrofolate interconversion. Its function is as follows. Catalyzes the oxidation of 5,10-methylenetetrahydrofolate to 5,10-methenyltetrahydrofolate and then the hydrolysis of 5,10-methenyltetrahydrofolate to 10-formyltetrahydrofolate. In Rickettsia bellii (strain RML369-C), this protein is Bifunctional protein FolD.